The primary structure comprises 368 residues: Histidinol-phosphate aminotransferase (368 aa).

Lys228 carries the post-translational modification N6-(pyridoxal phosphate)lysine.

This sequence belongs to the class-II pyridoxal-phosphate-dependent aminotransferase family. Histidinol-phosphate aminotransferase subfamily. Pyridoxal 5'-phosphate is required as a cofactor.

The enzyme catalyses L-histidinol phosphate + 2-oxoglutarate = 3-(imidazol-4-yl)-2-oxopropyl phosphate + L-glutamate. It participates in amino-acid biosynthesis; L-histidine biosynthesis; L-histidine from 5-phospho-alpha-D-ribose 1-diphosphate: step 7/9. The sequence is that of Histidinol-phosphate aminotransferase from Methanosarcina mazei (strain ATCC BAA-159 / DSM 3647 / Goe1 / Go1 / JCM 11833 / OCM 88) (Methanosarcina frisia).